The primary structure comprises 79 residues: Reactive oxygen species modulator 1 (79 aa).

A helical membrane pass occupies residues 22 to 44; the sequence is GFVMGCAVGMAAGALFGTFSCLR. The segment at 42 to 60 is sufficient for antibacterial activity; the sequence is CLRIGMRGRELMGGIGKTM.

The protein belongs to the MGR2 family.

The protein localises to the mitochondrion inner membrane. Its function is as follows. Has antibacterial activity against a variety of bacteria including S.aureus, P.aeruginosa and M.tuberculosis. Acts by inducing bacterial membrane breakage. In terms of biological role, induces production of reactive oxygen species (ROS) which are necessary for cell proliferation. May play a role in inducing oxidative DNA damage and replicative senescence. May play a role in the coordination of mitochondrial morphology and cell proliferation. This is Reactive oxygen species modulator 1 (ROMO1) from Bos taurus (Bovine).